A 161-amino-acid polypeptide reads, in one-letter code: Protein E6 (161 aa).

2 zinc fingers span residues 45–81 (CNFCGNFLTYLEICEFDEKRLSLIWKEYLVYACCRCC) and 118–154 (CQTCMKYLDAIEKLDICGRRRPFHLVRGSWKGICRLC).

It belongs to the papillomaviridae E6 protein family. As to quaternary structure, forms homodimers. Interacts with ubiquitin-protein ligase UBE3A/E6-AP; this interaction stimulates UBE3A ubiquitin activity. Interacts with host BAK1.

The protein localises to the host cytoplasm. It is found in the host nucleus. Functionally, plays a major role in the induction and maintenance of cellular transformation. E6 associates with host UBE3A/E6-AP ubiquitin-protein ligase and modulates its activity. Protects host keratinocytes from apoptosis by mediating the degradation of host BAK1. May also inhibit host immune response. This chain is Protein E6, found in Homo sapiens (Human).